Here is a 620-residue protein sequence, read N- to C-terminus: Siderophore iron transporter ARN2 (620 aa).

Residues M1–K42 form a disordered region. The span at K16–K42 shows a compositional bias: basic and acidic residues. 14 consecutive transmembrane segments (helical) span residues I71 to Y93, L106 to L128, L135 to Q152, A162 to S184, W191 to V213, W223 to M245, V286 to G308, I318 to W335, V355 to Y377, T392 to T414, S421 to Y438, G448 to V470, V491 to P513, and V561 to V578.

Belongs to the major facilitator superfamily.

It localises to the endosome membrane. In terms of biological role, involved in the transport of siderophore triacestylfusarinine C and so has a role in iron homeostasis. The protein is Siderophore iron transporter ARN2 (ARN2) of Saccharomyces cerevisiae (strain ATCC 204508 / S288c) (Baker's yeast).